A 404-amino-acid chain; its full sequence is Activity-regulated cytoskeleton-associated protein (404 aa).

Positions 51–78 form a coiled coil; the sequence is EVSKQVERELKGLQKSVGKLENNLEDHV. A disordered region spans residues 351-404; the sequence is VQGNMDHSEEPSPQRTPEIQSGDSVESMPPSTTASPVPSNGTQPEPPSPPATVI. Polar residues predominate over residues 363 to 393; the sequence is PQRTPEIQSGDSVESMPPSTTASPVPSNGTQ. The span at 394–404 shows a compositional bias: pro residues; sequence PEPPSPPATVI.

The protein belongs to the ARC/ARG3.1 family. As to quaternary structure, homooligomer; homooligomerizes into virion-like capsids. Post-translationally, palmitoylation anchors the protein into the membrane by allowing direct insertion into the hydrophobic core of the lipid bilayer. As to expression, expressed at various levels throughout the brain.

The protein resides in the extracellular vesicle membrane. It localises to the postsynaptic cell membrane. The protein localises to the synapse. Its subcellular location is the postsynaptic density. It is found in the early endosome membrane. The protein resides in the cell projection. It localises to the dendrite. The protein localises to the cytoplasm. Its subcellular location is the cytoskeleton. It is found in the cell cortex. The protein resides in the dendritic spine. Its function is as follows. Master regulator of synaptic plasticity that self-assembles into virion-like capsids that encapsulate RNAs and mediate intercellular RNA transfer in the nervous system. ARC protein is released from neurons in extracellular vesicles that mediate the transfer of ARC mRNA into new target cells, where ARC mRNA can undergo activity-dependent translation. ARC capsids are endocytosed and are able to transfer ARC mRNA into the cytoplasm of neurons. Acts as a key regulator of synaptic plasticity: required for protein synthesis-dependent forms of long-term potentiation (LTP) and depression (LTD) and for the formation of long-term memory. Regulates synaptic plasticity by promoting endocytosis of AMPA receptors (AMPARs) in response to synaptic activity: this endocytic pathway maintains levels of surface AMPARs in response to chronic changes in neuronal activity through synaptic scaling, thereby contributing to neuronal homeostasis. Acts as a postsynaptic mediator of activity-dependent synapse elimination in the developing cerebellum by mediating elimination of surplus climbing fiber synapses. Accumulates at weaker synapses, probably to prevent their undesired enhancement. This suggests that ARC-containing virion-like capsids may be required to eliminate synaptic material. The chain is Activity-regulated cytoskeleton-associated protein from Gallus gallus (Chicken).